Reading from the N-terminus, the 201-residue chain is Ribonuclease HII (201 aa).

The RNase H type-2 domain occupies 10–200 (LIEAGCDEAG…LGDGQLELFS (191 aa)). A divalent metal cation-binding residues include aspartate 16, glutamate 17, and aspartate 108.

The protein belongs to the RNase HII family. Mn(2+) serves as cofactor. Mg(2+) is required as a cofactor.

The protein localises to the cytoplasm. It carries out the reaction Endonucleolytic cleavage to 5'-phosphomonoester.. Endonuclease that specifically degrades the RNA of RNA-DNA hybrids. The chain is Ribonuclease HII from Bacteroides fragilis (strain YCH46).